The primary structure comprises 1218 residues: Probable cation-transporting ATPase 13A5 (1218 aa).

4 helical membrane passes run 33-53 (KAFC…VFYW), 222-242 (GYIE…VLSV), 401-421 (FIVF…GVYM), and 433-453 (MALI…LTIG). D486 serves as the catalytic 4-aspartylphosphate intermediate. N-linked (GlcNAc...) asparagine glycans are attached at residues N540, N669, and N819. Mg(2+) is bound by residues D850 and D854. Helical transmembrane passes span 903-923 (FGVF…ALLL), 940-956 (VAIT…THAY), 973-993 (LLLS…SAFL), 1042-1062 (FETT…AFIF), 1077-1097 (IFSF…FSDF), and 1115-1135 (VLIL…EDSI).

This sequence belongs to the cation transport ATPase (P-type) (TC 3.A.3) family. Type V subfamily.

The protein resides in the membrane. The catalysed reaction is ATP + H2O = ADP + phosphate + H(+). This Homo sapiens (Human) protein is Probable cation-transporting ATPase 13A5 (ATP13A5).